The primary structure comprises 212 residues: Maleylacetoacetate isomerase (212 aa).

One can recognise a GST N-terminal domain in the interval Met1–Ala83. One can recognise a GST C-terminal domain in the interval Asp88 to Ala211.

Belongs to the GST superfamily. Zeta family.

The enzyme catalyses 4-maleylacetoacetate = 4-fumarylacetoacetate. Its pathway is amino-acid degradation; L-phenylalanine degradation; acetoacetate and fumarate from L-phenylalanine: step 5/6. The polypeptide is Maleylacetoacetate isomerase (maiA) (Pseudomonas aeruginosa (strain ATCC 15692 / DSM 22644 / CIP 104116 / JCM 14847 / LMG 12228 / 1C / PRS 101 / PAO1)).